The following is a 1197-amino-acid chain: ATP-dependent helicase/nuclease subunit A (1197 aa).

Positions 2 to 458 (RQWTKEQQAA…IDLAKNFRSR (457 aa)) constitute a UvrD-like helicase ATP-binding domain. 23–30 (AAAGSGKT) lines the ATP pocket. Residues 485 to 774 (RAALYQGTEF…RIMSIHKSKG (290 aa)) form the UvrD-like helicase C-terminal domain.

It belongs to the helicase family. AddA subfamily. Heterodimer of AddA and AddB/RexB. Mg(2+) is required as a cofactor.

The enzyme catalyses Couples ATP hydrolysis with the unwinding of duplex DNA by translocating in the 3'-5' direction.. It catalyses the reaction ATP + H2O = ADP + phosphate + H(+). The heterodimer acts as both an ATP-dependent DNA helicase and an ATP-dependent, dual-direction single-stranded exonuclease. Recognizes the chi site generating a DNA molecule suitable for the initiation of homologous recombination. The AddA nuclease domain is required for chi fragment generation; this subunit has the helicase and 3' -&gt; 5' nuclease activities. In Alkaliphilus oremlandii (strain OhILAs) (Clostridium oremlandii (strain OhILAs)), this protein is ATP-dependent helicase/nuclease subunit A.